Here is a 259-residue protein sequence, read N- to C-terminus: Polycomb group RING finger protein 1 (259 aa).

An N-acetylalanine modification is found at A2. S3 is modified (phosphoserine). A Glycyl lysine isopeptide (Lys-Gly) (interchain with G-Cter in SUMO2) cross-link involves residue K24. The RING-type zinc-finger motif lies at 47–86 (CCLCAGYFVDATTITECLHTFCKSCIVKYLQTSKYCPMCN). Residues 86–247 (NIKIHETQPL…LSRWFGKPSP (162 aa)) are required for repressor activity. K88 is covalently cross-linked (Glycyl lysine isopeptide (Lys-Gly) (interchain with G-Cter in SUMO2)). The segment at 150-255 (LPFSSFDHSK…SPLLLQYSVK (106 aa)) is required for the interaction with the KDM2B-SKP1 heterodimeric complex. The RING-finger and WD40-associated ubiquitin-like domain (RAWUL); sufficient for interaction with BCOR and BCORL1 stretch occupies residues 167 to 255 (EQLNLCLERL…SPLLLQYSVK (89 aa)).

In terms of assembly, interacts with BCORL1, forming heterodimers. The PCGF1-BCORL1 heterodimeric complex interacts with the KDM2B-SKP1 heterodimeric complex to form a homotetrameric polycomb repression complex 1 (PRC1.1). Component of the repressive BCOR complex containing a Polycomb group subcomplex at least composed of RYBP, RING1 and RNF2/RING2. Specifically interacts with BCOR, RING1 and RNF2/RING2. Component of a PRC1-like complex. Interacts with CBX6, CBX7 and CBX8. Interacts with DPPA4, NANOG, POU5F1 and RYBP. In terms of tissue distribution, ubiquitous.

The protein localises to the nucleus. Component of the Polycomb group (PcG) multiprotein BCOR complex, a complex required to maintain the transcriptionally repressive state of some genes, such as BCL6 and the cyclin-dependent kinase inhibitor, CDKN1A. Transcriptional repressor that may be targeted to the DNA by BCL6; this transcription repressor activity may be related to PKC signaling pathway. Represses CDKN1A expression by binding to its promoter, and this repression is dependent on the retinoic acid response element (RARE element). Promotes cell cycle progression and enhances cell proliferation as well. May have a positive role in tumor cell growth by down-regulating CDKN1A. Component of a Polycomb group (PcG) multiprotein PRC1-like complex, a complex class required to maintain the transcriptionally repressive state of many genes, including Hox genes, throughout development. PcG PRC1 complex acts via chromatin remodeling and modification of histones; it mediates monoubiquitination of histone H2A 'Lys-119', rendering chromatin heritably changed in its expressibility. Within the PRC1-like complex, regulates RNF2 ubiquitin ligase activity. Regulates the expression of DPPA4 and NANOG in the NT2 embryonic carcinoma cells. The protein is Polycomb group RING finger protein 1 (PCGF1) of Homo sapiens (Human).